Here is a 930-residue protein sequence, read N- to C-terminus: Isoleucine--tRNA ligase (930 aa).

Positions P57–H67 match the 'HIGH' region motif. E554 serves as a coordination point for L-isoleucyl-5'-AMP. The 'KMSKS' region signature appears at K595–S599. Residue K598 coordinates ATP. Residues C888, C891, C908, and C911 each coordinate Zn(2+).

This sequence belongs to the class-I aminoacyl-tRNA synthetase family. IleS type 1 subfamily. As to quaternary structure, monomer. Requires Zn(2+) as cofactor.

Its subcellular location is the cytoplasm. It carries out the reaction tRNA(Ile) + L-isoleucine + ATP = L-isoleucyl-tRNA(Ile) + AMP + diphosphate. In terms of biological role, catalyzes the attachment of isoleucine to tRNA(Ile). As IleRS can inadvertently accommodate and process structurally similar amino acids such as valine, to avoid such errors it has two additional distinct tRNA(Ile)-dependent editing activities. One activity is designated as 'pretransfer' editing and involves the hydrolysis of activated Val-AMP. The other activity is designated 'posttransfer' editing and involves deacylation of mischarged Val-tRNA(Ile). This chain is Isoleucine--tRNA ligase, found in Streptococcus pneumoniae serotype 4 (strain ATCC BAA-334 / TIGR4).